Reading from the N-terminus, the 75-residue chain is MSNTAPGPTVANKRDEKHRHVVNVVLELPTEISEATHPVLATMLSKYTRMSSLFNDKCAFKLDLLRMIAVSRTRR.

Belongs to the herpesviridae small capsomere-interacting protein family. Interacts with the major capsid protein/MCP.

Its subcellular location is the virion. The protein resides in the host nucleus. Participates in the assembly of the infectious particles by decorating the outer surface of the capsid shell and thus forming a layer between the capsid and the tegument. Complexes composed of the capsid protein VP5 and UL48A assemble together in the host cytoplasm and are translocated to the nucleus, where they accumulate and participate in capsid assembly. Its function is as follows. Participates in the assembly of the infectious particles by decorating the outer surface of the capsid shell and thus forming a layer between the capsid and the tegument. Complexes composed of the major capsid protein and small capsomere-interacting protein/SCP assemble together in the host cytoplasm and are translocated to the nucleus, where they accumulate and participate in capsid assembly. In Homo sapiens (Human), this protein is Small capsomere-interacting protein.